The primary structure comprises 469 residues: uncharacterized protein (469 aa).

The stretch at 11-65 (LFISVAFSQESVEDLKRLLEEYKKKIQEIERRLEELEKAKKEEEKKKEAVALKPT) forms a coiled coil.

This is an uncharacterized protein from Aquifex aeolicus (strain VF5).